The following is a 919-amino-acid chain: Alpha-amylase (919 aa).

The first 33 residues, 1–33 (MPATRRTARVRRVAAVTVTALAAALLPPLAARA), serve as a signal peptide directing secretion. Asn182 and Asp281 together coordinate Ca(2+). Residue Asp312 is the Nucleophile of the active site. Position 316 (His316) interacts with Ca(2+). Glu346 functions as the Proton donor in the catalytic mechanism. Residues 704 to 729 (ASGRLHHRHPARRGGAHRRLPGPRGR) are disordered. Residues 707–724 (RLHHRHPARRGGAHRRLP) show a composition bias toward basic residues.

Belongs to the glycosyl hydrolase 13 family. As to quaternary structure, monomer. The cofactor is Ca(2+).

The protein resides in the secreted. It catalyses the reaction Endohydrolysis of (1-&gt;4)-alpha-D-glucosidic linkages in polysaccharides containing three or more (1-&gt;4)-alpha-linked D-glucose units.. This Streptomyces lividans protein is Alpha-amylase (amy).